A 280-amino-acid chain; its full sequence is Truncated lectin 2 (280 aa).

The N-terminal stretch at 1–26 (MSSSNFSCILSISLTFFILLLNKVNS) is a signal peptide. Residues E148 and D150 each contribute to the Mn(2+) site. Ca(2+) contacts are provided by D150, F152, N154, and D158. D158 provides a ligand contact to Mn(2+). An N-linked (GlcNAc...) asparagine glycan is attached at N163. Mn(2+) is bound at residue H170. Residue N272 is glycosylated (N-linked (GlcNAc...) asparagine).

Belongs to the leguminous lectin family.

The sequence is that of Truncated lectin 2 (LEC2) from Medicago truncatula (Barrel medic).